We begin with the raw amino-acid sequence, 720 residues long: Aminopeptidase RNPEPL1 (720 aa).

321-325 (VAMEN) contributes to the substrate binding site. His-348 contacts Zn(2+). Glu-349 acts as the Proton acceptor in catalysis. Zn(2+)-binding residues include His-352 and Glu-371. A disordered region spans residues 671-708 (GLGPSAEPSTEPSTDLGGAEADTNPDSPALLLGDEAPS).

The protein belongs to the peptidase M1 family. Requires Zn(2+) as cofactor.

The catalysed reaction is Release of N-terminal amino acids, preferentially methionine, from peptides and arylamides.. Broad specificity aminopeptidase which preferentially hydrolyzes an N-terminal methionine, citrulline or glutamine. This Mus musculus (Mouse) protein is Aminopeptidase RNPEPL1.